Here is a 1066-residue protein sequence, read N- to C-terminus: DNA-directed RNA polymerase subunit beta (1066 aa).

It belongs to the RNA polymerase beta chain family. In terms of assembly, in plastids the minimal PEP RNA polymerase catalytic core is composed of four subunits: alpha, beta, beta', and beta''. When a (nuclear-encoded) sigma factor is associated with the core the holoenzyme is formed, which can initiate transcription.

Its subcellular location is the plastid. It is found in the chloroplast. The catalysed reaction is RNA(n) + a ribonucleoside 5'-triphosphate = RNA(n+1) + diphosphate. Its function is as follows. DNA-dependent RNA polymerase catalyzes the transcription of DNA into RNA using the four ribonucleoside triphosphates as substrates. The chain is DNA-directed RNA polymerase subunit beta from Psilotum nudum (Whisk fern).